Consider the following 644-residue polypeptide: uncharacterized protein (644 aa).

Positions 1 to 39 (MKANGLDNDPARTRMERTDIDSEHPEAQPLLNNNHRTLG) are disordered. Topologically, residues 1 to 90 (MKANGLDNDP…ILNILILINT (90 aa)) are cytoplasmic. The span at 9 to 26 (DPARTRMERTDIDSEHPE) shows a compositional bias: basic and acidic residues. Phosphoserine occurs at positions 22, 56, and 63. Residues 91–111 (IWLVTTLISDFFFNINILFGF) traverse the membrane as a helical segment. At 112–122 (SNRYASFNDLT) the chain is on the vacuolar side. Residues 123 to 143 (LIFISIIANSFNLWFNKLGLY) form a helical membrane-spanning segment. Topologically, residues 144 to 147 (SALD) are cytoplasmic. A helical membrane pass occupies residues 148-168 (YSLNVTLCVLTLFNLALTYLI). The Vacuolar segment spans residues 169–174 (KYTRQR). A helical transmembrane segment spans residues 175–195 (IGFVGTFTYLWTSFSFFIGAI). Residues 196–271 (LDWYLLFYNN…EWVSIGFRNT (76 aa)) lie on the Cytoplasmic side of the membrane. Residues 225 to 251 (NENHTNSTENRDRSQYGSGSPTPTHRS) are disordered. Polar residues predominate over residues 239–251 (QYGSGSPTPTHRS). S244 carries the phosphoserine modification. Residues 272 to 292 (IKFLILIFFALFTLNTLLTTL) traverse the membrane as a helical segment. At 293–644 (DTYRLTHKLP…IGELGKLTED (352 aa)) the chain is on the vacuolar side. The 272-residue stretch at 348–619 (PIILFEHGGY…IVEGGHEIYK (272 aa)) folds into the AB hydrolase-1 domain. The disordered stretch occupies residues 469–492 (GRGDGDDGDDGNGNDGDGRNHDKT).

The protein resides in the vacuole membrane. This is an uncharacterized protein from Saccharomyces cerevisiae (strain YJM789) (Baker's yeast).